The sequence spans 90 residues: MARTIFCTYLQRDAEGQDFQLYPGDLGKRIFNEISKEAWAQWQQKQTMLINEKKLTMMNPDHRKLLEAEMVNFLFEGKEVHIEGYTPPEK.

It belongs to the Fe(2+)-trafficking protein family. Monomer.

Functionally, could be a mediator in iron transactions between iron acquisition and iron-requiring processes, such as synthesis and/or repair of Fe-S clusters in biosynthetic enzymes. The sequence is that of Probable Fe(2+)-trafficking protein from Enterobacter sp. (strain 638).